The following is a 288-amino-acid chain: Glycine--tRNA ligase alpha subunit (288 aa).

It belongs to the class-II aminoacyl-tRNA synthetase family. Tetramer of two alpha and two beta subunits.

The protein localises to the cytoplasm. The enzyme catalyses tRNA(Gly) + glycine + ATP = glycyl-tRNA(Gly) + AMP + diphosphate. The sequence is that of Glycine--tRNA ligase alpha subunit from Desulfatibacillum aliphaticivorans.